The sequence spans 610 residues: Zinc metalloproteinase-disintegrin-like VAP1 (610 aa).

The N-terminal stretch at Met-1–Ser-20 is a signal peptide. Positions Val-21 to Pro-189 are excised as a propeptide. Residue Glu-190 is modified to Pyrrolidone carboxylic acid (Glu). Residues Lys-199–Pro-395 enclose the Peptidase M12B domain. Asn-218 carries N-linked (GlcNAc...) asparagine glycosylation. Cystine bridges form between Cys-310/Cys-390, Cys-350/Cys-374, and Cys-352/Cys-357. His-335 contacts Zn(2+). The Metal-binding signature appears at His-335–Asp-346. Glu-336 acts as the Proton acceptor in catalysis. 2 residues coordinate Zn(2+): His-339 and His-345. A Disintegrin domain is found at Pro-403 to Asn-488. 6 residues coordinate Ca(2+): Val-405, Asn-408, Phe-410, Glu-412, Glu-415, and Asp-418. 14 disulfides stabilise this stretch: Cys-406–Cys-435, Cys-417–Cys-430, Cys-419–Cys-425, Cys-429–Cys-452, Cys-443–Cys-449, Cys-448–Cys-474, Cys-461–Cys-481, Cys-468–Cys-499, Cys-492–Cys-504, Cys-511–Cys-561, Cys-526–Cys-572, Cys-539–Cys-549, Cys-556–Cys-598, and Cys-592–Cys-603. The D/ECD-tripeptide signature appears at Glu-467–Asp-469. The Ca(2+) site is built by Asp-469, Met-470, Asp-472, Asp-483, and Arg-484.

It belongs to the venom metalloproteinase (M12B) family. P-III subfamily. P-IIIc sub-subfamily. Homodimer; disulfide-linked. Zn(2+) serves as cofactor. In terms of processing, the N-terminus is blocked. In terms of tissue distribution, expressed by the venom gland.

It is found in the secreted. With respect to regulation, inhibited by EDTA and EGTA, but not by PMSF. Zinc metalloprotease that has fibrinogenolytic and hemorrhagic activities. It induces apoptosis in vascular endothelial cells (VEC), without degrading extracellular matrix (it cannot cleave collagen) or inhibiting adhesion of VEC. VAP1-induced apoptosis is inhibited by antibodies for integrin alpha-3, alpha-6, beta-1 and CD9. Apoptosis is accompanied by severe cell fragmentation, which is controlled by caspases. The polypeptide is Zinc metalloproteinase-disintegrin-like VAP1 (Crotalus atrox (Western diamondback rattlesnake)).